The sequence spans 1070 residues: DNA-directed RNA polymerase subunit beta (1070 aa).

The protein belongs to the RNA polymerase beta chain family. In terms of assembly, in plastids the minimal PEP RNA polymerase catalytic core is composed of four subunits: alpha, beta, beta', and beta''. When a (nuclear-encoded) sigma factor is associated with the core the holoenzyme is formed, which can initiate transcription.

The protein resides in the plastid. It localises to the chloroplast. It carries out the reaction RNA(n) + a ribonucleoside 5'-triphosphate = RNA(n+1) + diphosphate. Functionally, DNA-dependent RNA polymerase catalyzes the transcription of DNA into RNA using the four ribonucleoside triphosphates as substrates. The polypeptide is DNA-directed RNA polymerase subunit beta (Phalaenopsis aphrodite subsp. formosana (Moth orchid)).